Reading from the N-terminus, the 760-residue chain is GLC7-interacting protein 4 (760 aa).

Disordered stretches follow at residues 449-573 (KKKP…SLQS) and 593-626 (KSAS…SSST). Low complexity-rich tracts occupy residues 454–474 (ITKL…ASPS) and 494–506 (SSRS…VRTT). A phosphoserine mark is found at Ser-497 and Ser-501. Over residues 512 to 525 (AETKKSVVSPEKRK) the composition is skewed to basic and acidic residues. Residues 534–554 (SSSLQSYTNKQQTSYLNSTRH) are compositionally biased toward polar residues. Low complexity-rich tracts occupy residues 561–573 (SKLN…SLQS) and 594–626 (SAST…SSST). Ser-609 is subject to Phosphoserine.

Belongs to the GIP4 family. In terms of assembly, interacts with GLC7.

It is found in the cytoplasm. Functionally, GLC7 phosphatase-regulatory protein involved in GLC7 subcellular redistribution and chromosome segregation. The chain is GLC7-interacting protein 4 (GIP4) from Saccharomyces cerevisiae (strain ATCC 204508 / S288c) (Baker's yeast).